A 315-amino-acid chain; its full sequence is Probable cell division protein WhiA (315 aa).

The segment at residues 275–309 (TLKELGEMVSSGTVSKSGVNHRLRKIDEIADALRR) is a DNA-binding region (H-T-H motif).

It belongs to the WhiA family.

Involved in cell division and chromosome segregation. The sequence is that of Probable cell division protein WhiA from Lysinibacillus sphaericus (strain C3-41).